The chain runs to 453 residues: Protein LIAT1 (453 aa).

The interval 1–152 (METRGPGLAV…HLPSDSSTVS (152 aa)) is disordered. A lysine-rich domain region spans residues 82–103 (KRKVKKKKRKKKTKGSGKGDDK). Residues 83–96 (RKVKKKKRKKKTKG) show a composition bias toward basic residues. Residues 106–117 (SQSLKSQPLSSS) show a composition bias toward low complexity. Over residues 125-145 (CKERGPKPEHRQSKVEKKHLP) the composition is skewed to basic and acidic residues. The segment at 145-197 (PSDSSTVSLPDFAEIENLANRINESLRWDGILADPEAEKERIRIYKLNRRKRY) is interaction with ATE1. 20 tandem repeats follow at residues 201-210 (ALKGFHPDPE), 211-220 (ALKGFHPDPD), 221-230 (ALKGFHPDPE), 231-240 (ALKGFHPDPE), 241-250 (ALKGFHPDPE), 251-260 (ALKGFHPDPE), 261-270 (ALKGIHPDPE), 271-280 (ALKGIHPDPE), 281-290 (ALKGFHPDPE), 291-300 (ALKGFHPDPE), 301-310 (ALKGFHTDPE), 311-320 (ALKGFHIDPE), 321-330 (ALKGFHPDPK), 331-340 (ALKGFHPDPK), 341-350 (ALKGFHTDPE), 351-360 (ALKGFHPDPK), 361-370 (ALKGFHPDPE), 371-380 (ALKGFHPDPE), 381-390 (ALKGFHPDPE), and 391-400 (ALKGFHTDPN). Residues 201–400 (ALKGFHPDPE…ALKGFHTDPN (200 aa)) form a 20 X 10 AA approximate tandem repeat of A-L-K-G-F-H-P-D-P-E region. Disordered stretches follow at residues 225-306 (FHPD…KGFH) and 320-432 (EALK…CPNL). Positions 320–396 (EALKGFHPDP…PDPEALKGFH (77 aa)) are enriched in basic and acidic residues.

Self-associates (via Lys-rich domain); targets LIAT1 to the nucleolus. Interacts with ATE1; it is not a substrate of ATE1, the interaction takes place in the cytoplasm and seems to increase ATE1 arginyltransferase activity. Interacts with JMJD6 and MRPS14. In terms of processing, post-translationally modified by JMJD6 lysyl-hydroxylase activity at its Lys-rich domain, which inhibits its self-association and nucleolar localization.

It localises to the nucleus. Its subcellular location is the nucleolus. The protein localises to the cytoplasm. In terms of biological role, participates in nucleolar liquid-liquid phase separation (LLPS) through its N-terminal intrinsically disordered region (IDR). May be involved in ATE1-mediated N-terminal arginylation. This chain is Protein LIAT1, found in Homo sapiens (Human).